The primary structure comprises 1297 residues: Insulin receptor-related protein (1297 aa).

Positions 1–26 are cleaved as a signal peptide; that stretch reads MAVPSLWPWGACLPVIFLSLGFGLDT. Asn-47 carries N-linked (GlcNAc...) asparagine glycosylation. 9 disulfide bridges follow: Cys-214-Cys-222, Cys-216-Cys-228, Cys-229-Cys-237, Cys-233-Cys-246, Cys-249-Cys-258, Cys-262-Cys-274, Cys-280-Cys-300, Cys-304-Cys-317, and Cys-320-Cys-324. N-linked (GlcNAc...) asparagine glycosylation occurs at Asn-311. N-linked (GlcNAc...) asparagine glycans are attached at residues Asn-411, Asn-492, Asn-528, Asn-616, and Asn-634. 2 Fibronectin type-III domains span residues 483–603 and 607–707; these read QTRT…TLPA and VPQD…AQEA. Cys-657 and Cys-864 form a disulfide bridge. Disordered stretches follow at residues 666–687 and 732–758; these read SNND…ESDC and SINK…GNSS. The segment covering 675–685 has biased composition (acidic residues); sequence EDGDPEAEMES. Residues 747–921 lie on the Extracellular side of the membrane; the sequence is AAGPLRLGGN…PEEEDAGGLH (175 aa). Residues Asn-756, Asn-885, and Asn-898 are each glycosylated (N-linked (GlcNAc...) asparagine). The Fibronectin type-III 3 domain maps to 818-913; it reads IPGKVAWEAS…SVAFYILGPE (96 aa). The chain crosses the membrane as a helical span at residues 922 to 943; that stretch reads VLLTATPVGLTLLIVLAALGFF. The Cytoplasmic segment spans residues 944–1297; the sequence is YGKKRNRTLY…CSPQNGGPGH (354 aa). A Protein kinase domain is found at 979–1254; it reads ISIIRELGQG…SIQEELRPSF (276 aa). Residues 985 to 993 and Lys-1013 each bind ATP; that span reads LGQGSFGMV. The active-site Proton acceptor is the Asp-1115. Tyr-1145 and Tyr-1146 each carry phosphotyrosine; by autocatalysis. Residues 1267–1297 form a disordered region; it reads GARGSLPTTDAEPDSSPTPRDCSPQNGGPGH. A compositionally biased stretch (polar residues) spans 1281–1297; that stretch reads SSPTPRDCSPQNGGPGH.

Belongs to the protein kinase superfamily. Tyr protein kinase family. Insulin receptor subfamily. In terms of assembly, probable tetramer of 2 alpha and 2 beta chains linked by disulfide bonds. The alpha chains contribute to the formation of the ligand-binding domain, while the beta chains carry the kinase domain. Post-translationally, autophosphorylated on tyrosine residues between pH 7.9 and pH 10.5.

Its subcellular location is the membrane. It carries out the reaction L-tyrosyl-[protein] + ATP = O-phospho-L-tyrosyl-[protein] + ADP + H(+). Functionally, receptor with tyrosine-protein kinase activity. Functions as a pH sensing receptor which is activated by increased extracellular pH. Activates an intracellular signaling pathway that involves IRS1 and AKT1/PKB. The polypeptide is Insulin receptor-related protein (INSRR) (Homo sapiens (Human)).